Reading from the N-terminus, the 233-residue chain is Ribonuclease 3 (233 aa).

One can recognise an RNase III domain in the interval A8 to G135. E48 serves as a coordination point for Mg(2+). Residue D52 is part of the active site. 2 residues coordinate Mg(2+): D121 and E124. Residue E124 is part of the active site. Residues D161–V230 enclose the DRBM domain.

This sequence belongs to the ribonuclease III family. As to quaternary structure, homodimer. It depends on Mg(2+) as a cofactor.

The protein resides in the cytoplasm. The catalysed reaction is Endonucleolytic cleavage to 5'-phosphomonoester.. Its function is as follows. Digests double-stranded RNA. Involved in the processing of primary rRNA transcript to yield the immediate precursors to the large and small rRNAs (23S and 16S). Processes some mRNAs, and tRNAs when they are encoded in the rRNA operon. Processes pre-crRNA and tracrRNA of type II CRISPR loci if present in the organism. The polypeptide is Ribonuclease 3 (Syntrophomonas wolfei subsp. wolfei (strain DSM 2245B / Goettingen)).